A 1237-amino-acid polypeptide reads, in one-letter code: uncharacterized protein (1237 aa).

The MHD1 domain occupies 591–712 (KDMLEIYSDL…IVLSKYTQWT (122 aa)). The C2 domain occupies 786 to 906 (LIEALDVAES…GDYLPREEWF (121 aa)). In terms of domain architecture, MHD2 spans 1014–1130 (EAAIYELLDY…KPTDFLLQEC (117 aa)).

This is an uncharacterized protein from Schizosaccharomyces pombe (strain 972 / ATCC 24843) (Fission yeast).